Here is a 225-residue protein sequence, read N- to C-terminus: Class E basic helix-loop-helix protein 23 (225 aa).

Positions 35–104 (EAARGYGTPG…PREQRSLRLS (70 aa)) are disordered. The bHLH domain maps to 100 to 154 (SLRLSINARERRRMHDLNDALDGLRAVIPYAHSPSVRKLSKIATLLLAKNYILMQ).

It localises to the nucleus. In terms of biological role, may function as transcriptional repressor. May modulate the expression of genes required for the differentiation and/or maintenance of pancreatic and neuronal cell types. May be important for rod bipolar cell maturation. The sequence is that of Class E basic helix-loop-helix protein 23 (BHLHE23) from Homo sapiens (Human).